Consider the following 445-residue polypeptide: POU domain, class 3, transcription factor 2 (445 aa).

Disordered stretches follow at residues 63–173 (TALS…WRSA), 203–269 (LGAG…TPTS), 336–361 (EADSSSGSPTSIDKIASQGRKRKKRT), and 411–445 (EKRMTPPGGTLPGAEDVYGGSRDTPPHHGVQTPVQ). Over residues 68–90 (GGSGGGGGGGGGGGGGGGGGGDG) the composition is skewed to gly residues. Residues 125-151 (QQQHQQQQQQQQQQQQQQQQQQQQQQQ) are compositionally biased toward low complexity. Residues 217-226 (LRDAHDEPHH) show a composition bias toward basic and acidic residues. A compositionally biased stretch (basic residues) spans 227–237 (ADHHPHPHSHP). Residues 239–253 (QQPPPPPPPQGPPGH) are compositionally biased toward pro residues. The POU-specific domain occupies 264–338 (EDTPTSDDLE…LLNKWLEEAD (75 aa)). Residue Ser343 is modified to Phosphoserine. Positions 356–415 (KRKKRTSIEVSVKGALESHFLKCPKPSAQEITSLADSLQLEKEVVRVWFCNRRQKEKRMT) form a DNA-binding region, homeobox.

Belongs to the POU transcription factor family. Class-3 subfamily. As to quaternary structure, interacts with PQBP1. Interaction with ISL1. As to expression, expressed specifically at high levels in the brain.

The protein resides in the nucleus. Transcription factor that plays a key role in neuronal differentiation. Binds preferentially to the recognition sequence which consists of two distinct half-sites, ('GCAT') and ('TAAT'), separated by a non-conserved spacer region of 0, 2, or 3 nucleotides. Acts as a transcriptional activator when binding cooperatively with SOX4, SOX11, or SOX12 to gene promoters. The combination of three transcription factors, ASCL1, POU3F2/BRN2 and MYT1L, is sufficient to reprogram fibroblasts and other somatic cells into induced neuronal (iN) cells in vitro. Acts downstream of ASCL1, accessing chromatin that has been opened by ASCL1, and promotes transcription of neuronal genes. The chain is POU domain, class 3, transcription factor 2 (Pou3f2) from Rattus norvegicus (Rat).